The following is a 444-amino-acid chain: Phosphoglucosamine mutase (444 aa).

Ser-102 (phosphoserine intermediate) is an active-site residue. Mg(2+) contacts are provided by Ser-102, Asp-241, Asp-243, and Asp-245. Ser-102 is modified (phosphoserine).

Belongs to the phosphohexose mutase family. It depends on Mg(2+) as a cofactor. In terms of processing, activated by phosphorylation.

It carries out the reaction alpha-D-glucosamine 1-phosphate = D-glucosamine 6-phosphate. Functionally, catalyzes the conversion of glucosamine-6-phosphate to glucosamine-1-phosphate. The sequence is that of Phosphoglucosamine mutase from Buchnera aphidicola subsp. Acyrthosiphon pisum (strain 5A).